The sequence spans 192 residues: Holliday junction branch migration complex subunit RuvA (192 aa).

A domain I region spans residues 1–61; that stretch reads MFEYLKGIVT…DTGITLYGFL (61 aa). The tract at residues 62 to 137 is domain II; the sequence is SLEDKELFLK…KLGDYVKKST (76 aa). The tract at residues 137-140 is flexible linker; that stretch reads TAAA. Residues 141–192 are domain III; it reads DLTPSLQDALLALVALGYTQKEVDRITPKLAKLPENTADGYVKEALALLLKK.

It belongs to the RuvA family. As to quaternary structure, homotetramer. Forms an RuvA(8)-RuvB(12)-Holliday junction (HJ) complex. HJ DNA is sandwiched between 2 RuvA tetramers; dsDNA enters through RuvA and exits via RuvB. An RuvB hexamer assembles on each DNA strand where it exits the tetramer. Each RuvB hexamer is contacted by two RuvA subunits (via domain III) on 2 adjacent RuvB subunits; this complex drives branch migration. In the full resolvosome a probable DNA-RuvA(4)-RuvB(12)-RuvC(2) complex forms which resolves the HJ.

The protein localises to the cytoplasm. Functionally, the RuvA-RuvB-RuvC complex processes Holliday junction (HJ) DNA during genetic recombination and DNA repair, while the RuvA-RuvB complex plays an important role in the rescue of blocked DNA replication forks via replication fork reversal (RFR). RuvA specifically binds to HJ cruciform DNA, conferring on it an open structure. The RuvB hexamer acts as an ATP-dependent pump, pulling dsDNA into and through the RuvAB complex. HJ branch migration allows RuvC to scan DNA until it finds its consensus sequence, where it cleaves and resolves the cruciform DNA. In Lactobacillus johnsonii (strain CNCM I-12250 / La1 / NCC 533), this protein is Holliday junction branch migration complex subunit RuvA.